The primary structure comprises 337 residues: Putative carbonic anhydrase-like protein 2 (337 aa).

Positions 1 to 16 (MIPWLLTACIYPCVIG) are cleaved as a signal peptide. The Alpha-carbonic anhydrase domain maps to 17–274 (PDFWGLLHGD…LNGRLVRTNI (258 aa)). The active site involves Tyr-140. A glycan (N-linked (GlcNAc...) asparagine) is linked at Asn-188. Residue 212–213 (TF) coordinates substrate.

Belongs to the alpha-carbonic anhydrase family.

Its subcellular location is the secreted. The polypeptide is Putative carbonic anhydrase-like protein 2 (cah-2) (Caenorhabditis elegans).